Here is a 1043-residue protein sequence, read N- to C-terminus: Ras guanine nucleotide exchange factor S (1043 aa).

The stretch at 109 to 142 forms a coiled coil; it reads IETLQTQRRQSTLNIQALQINNELQQQLQQQQQL. Low complexity-rich tracts occupy residues 135–145, 245–258, 266–281, and 293–307; these read QLQQQQQLPPI, LSPLLNGGASGLSS, SKNQLNSSSGSNNSSS, and NNNNSSGNQSASNSS. 2 disordered regions span residues 135–160 and 245–316; these read QLQQQQQLPPIDQLPPPPTSTSTSTI and LSPL…HQSQ. The stretch at 404 to 434 forms a coiled coil; it reads LAVSLQNVEGLQNIAENLEDETLNLLDLVNE. The N-terminal Ras-GEF domain occupies 645-768; sequence KDGSILKVTL…LLRGLLDKMI (124 aa). The Ras-GEF domain occupies 803–1043; sequence SAQSIAQQLT…YDLSIALEPK (241 aa).

Its function is as follows. Promotes the exchange of Ras-bound GDP by GTP. The polypeptide is Ras guanine nucleotide exchange factor S (gefS) (Dictyostelium discoideum (Social amoeba)).